The following is a 315-amino-acid chain: Putative quercetin 2,3-dioxygenase PA1205 (315 aa).

Residues His-77, His-79, His-121, and Glu-123 each contribute to the a divalent metal cation site.

Belongs to the pirin family. A divalent metal cation serves as cofactor.

It carries out the reaction quercetin + O2 = 2-(3,4-dihydroxybenzoyloxy)-4,6-dihydroxybenzoate + CO. The protein operates within flavonoid metabolism; quercetin degradation. Its function is as follows. Putative quercetin 2,3-dioxygenase. This Pseudomonas aeruginosa (strain ATCC 15692 / DSM 22644 / CIP 104116 / JCM 14847 / LMG 12228 / 1C / PRS 101 / PAO1) protein is Putative quercetin 2,3-dioxygenase PA1205.